The primary structure comprises 713 residues: Leucine-rich repeat neuronal protein 2 (713 aa).

Positions 1-18 (MRLLVAPLLLAWVAGATA) are cleaved as a signal peptide. Residues 19-630 (AVPVVPWHVP…CHRALGDRPG (612 aa)) are Extracellular-facing. In terms of domain architecture, LRRNT spans 20–69 (VPVVPWHVPCPPQCACQIRPWYTPRSSYREATTVDCNDLFLTAVPPALPA). 12 LRR repeats span residues 70–91 (GTQT…ELGY), 94–115 (NLTE…DFHA), 118–139 (QLLS…SFAG), 142–163 (SLQE…AFSG), 166–187 (NLLR…WFEM), 190–211 (NLEI…NFRP), 214–235 (NLRS…ALEG), 238–259 (SLES…ALEQ), 262–283 (GLKF…DFAN), 286–305 (HLKE…DKFA), 311–333 (ELTK…AFHH), and 336–357 (QMET…TVES). N-linked (GlcNAc...) asparagine glycosylation occurs at asparagine 94. The LRRCT domain maps to 369–422 (NPIRCDCVIRWANATGTRVRFIEPQSTLCAEPPDLQRLPVREVPFREMTDHCLP). N-linked (GlcNAc...) asparagine glycosylation is present at asparagine 381. An Ig-like C2-type domain is found at 422–511 (PLISPRSFPP…LVGADTKTVS (90 aa)). A disulfide bridge connects residues cysteine 445 and cysteine 497. Asparagine 555 and asparagine 583 each carry an N-linked (GlcNAc...) asparagine glycan. Residues 631–651 (LIAILALAVLLLAAGLAAHLG) traverse the membrane as a helical segment. Topologically, residues 652–713 (TGQPRKGVGG…TLLPPLSQNS (62 aa)) are cytoplasmic.

In terms of tissue distribution, overamplified in malignant gliomas.

The protein localises to the membrane. The protein is Leucine-rich repeat neuronal protein 2 (LRRN2) of Homo sapiens (Human).